Consider the following 295-residue polypeptide: sn-glycerol-3-phosphate transport system permease protein UgpA (295 aa).

Residues 1–11 are Cytoplasmic-facing; sequence MSSSRPVFRSR. Residues 12–32 form a helical membrane-spanning segment; sequence WLPYLLVAPQLVITVIFFIWP. Residues 33 to 80 lie on the Periplasmic side of the membrane; that stretch reads AGEALWYSLQSVDPFGFSSQFVGLENFVALFHDSYYLDAFWTTIKFSA. Positions 76–284 constitute an ABC transmembrane type-1 domain; sequence IKFSALVTFS…FLVIILTVVQ (209 aa). Residues 81 to 101 form a helical membrane-spanning segment; sequence LVTFSGLLVSLFFAALVDYVV. Over 102 to 109 the chain is Cytoplasmic; it reads RGSRFYQT. A helical transmembrane segment spans residues 110–130; the sequence is LMLLPYAVAPAVAAVLWIFLF. The Periplasmic portion of the chain corresponds to 131–157; the sequence is NPGRGLITHFLGEFGYDWNHAQNSGQA. The chain crosses the membrane as a helical span at residues 158–178; it reads MFLVVFASVWKQISYNFLFFF. Topologically, residues 179-207 are cytoplasmic; it reads AALQSIPRSLVEAAAIDGAGPIRRFFRLS. The chain crosses the membrane as a helical span at residues 208-228; that stretch reads LPLIAPVSFFLLVVNLVYAFF. At 229–262 the chain is on the periplasmic side; sequence DTFPVIDAATAGGPVQATTTLIYKIYCEGFTGLD. The chain crosses the membrane as a helical span at residues 263-283; sequence LSASAAQSVVLMFLVIILTVV. The Cytoplasmic portion of the chain corresponds to 284–295; the sequence is QFRYVESKVRYQ.

The protein belongs to the binding-protein-dependent transport system permease family. UgpAE subfamily. As to quaternary structure, the complex is composed of two ATP-binding proteins (UgpC), two transmembrane proteins (UgpA and UgpE) and a solute-binding protein (UgpB).

The protein resides in the cell inner membrane. Part of the ABC transporter complex UgpBAEC involved in sn-glycerol-3-phosphate (G3P) import. Probably responsible for the translocation of the substrate across the membrane. The polypeptide is sn-glycerol-3-phosphate transport system permease protein UgpA (ugpA) (Salmonella typhi).